Here is a 185-residue protein sequence, read N- to C-terminus: Ribosome-recycling factor (185 aa).

The protein belongs to the RRF family.

It localises to the cytoplasm. Responsible for the release of ribosomes from messenger RNA at the termination of protein biosynthesis. May increase the efficiency of translation by recycling ribosomes from one round of translation to another. The chain is Ribosome-recycling factor from Vibrio parahaemolyticus serotype O3:K6 (strain RIMD 2210633).